The primary structure comprises 73 residues: Large ribosomal subunit protein bL31 (73 aa).

Belongs to the bacterial ribosomal protein bL31 family. Type A subfamily. As to quaternary structure, part of the 50S ribosomal subunit.

In terms of biological role, binds the 23S rRNA. This Bartonella tribocorum (strain CIP 105476 / IBS 506) protein is Large ribosomal subunit protein bL31.